Here is a 494-residue protein sequence, read N- to C-terminus: Probable cytosol aminopeptidase (494 aa).

Positions 264 and 269 each coordinate Mn(2+). The active site involves K276. D287, D346, and E348 together coordinate Mn(2+). R350 is an active-site residue.

The protein belongs to the peptidase M17 family. Requires Mn(2+) as cofactor.

Its subcellular location is the cytoplasm. The catalysed reaction is Release of an N-terminal amino acid, Xaa-|-Yaa-, in which Xaa is preferably Leu, but may be other amino acids including Pro although not Arg or Lys, and Yaa may be Pro. Amino acid amides and methyl esters are also readily hydrolyzed, but rates on arylamides are exceedingly low.. It carries out the reaction Release of an N-terminal amino acid, preferentially leucine, but not glutamic or aspartic acids.. Functionally, presumably involved in the processing and regular turnover of intracellular proteins. Catalyzes the removal of unsubstituted N-terminal amino acids from various peptides. This is Probable cytosol aminopeptidase (pepA) from Pasteurella multocida (strain Pm70).